Here is an 89-residue protein sequence, read N- to C-terminus: Small ribosomal subunit protein uS15 (89 aa).

Residues 1-23 (MTLNTQEKQKLINTHQNHGTDTG) form a disordered region.

The protein belongs to the universal ribosomal protein uS15 family. Part of the 30S ribosomal subunit. Forms a bridge to the 50S subunit in the 70S ribosome, contacting the 23S rRNA.

One of the primary rRNA binding proteins, it binds directly to 16S rRNA where it helps nucleate assembly of the platform of the 30S subunit by binding and bridging several RNA helices of the 16S rRNA. In terms of biological role, forms an intersubunit bridge (bridge B4) with the 23S rRNA of the 50S subunit in the ribosome. The sequence is that of Small ribosomal subunit protein uS15 from Prochlorococcus marinus (strain MIT 9211).